The primary structure comprises 283 residues: Phosphate import ATP-binding protein PstB (283 aa).

Positions 1-20 (MAQTLAQTKQISQSHTFDVS) are enriched in polar residues. The segment at 1-32 (MAQTLAQTKQISQSHTFDVSQSHHKTPDDTNS) is disordered. The ABC transporter domain maps to 37–278 (YSTQNLDLWY…PSNKKTEDYI (242 aa)). 69–76 (GPSGCGKS) provides a ligand contact to ATP.

Belongs to the ABC transporter superfamily. Phosphate importer (TC 3.A.1.7) family. In terms of assembly, the complex is composed of two ATP-binding proteins (PstB), two transmembrane proteins (PstC and PstA) and a solute-binding protein (PstS).

It is found in the cell membrane. It catalyses the reaction phosphate(out) + ATP + H2O = ADP + 2 phosphate(in) + H(+). In terms of biological role, part of the ABC transporter complex PstSACB involved in phosphate import. Responsible for energy coupling to the transport system. The sequence is that of Phosphate import ATP-binding protein PstB from Staphylococcus aureus (strain USA300).